An 882-amino-acid chain; its full sequence is Serine/threonine-protein kinase greatwall (882 aa).

N-acetylmethionine is present on Met1. The region spanning 35 to 838 (FTIVKPISRG…MKELKRHHLF (804 aa)) is the Protein kinase domain. ATP-binding positions include 41–49 (ISRGAFGKV) and Lys62. Asp156 acts as the Proton acceptor in catalysis. Phosphothreonine occurs at positions 207 and 222. Residues Ser293, Ser371, and Ser454 each carry the phosphoserine modification. At Thr521 the chain carries Phosphothreonine. Ser554, Ser558, Ser633, Ser660, and Ser671 each carry phosphoserine. A disordered region spans residues 713-736 (TPNQVKSGTPYRTPKSVRRGAAPV). A Phosphothreonine modification is found at Thr725. Position 728 is a phosphoserine (Ser728). The residue at position 744 (Thr744) is a Phosphothreonine; by CDK1. An AGC-kinase C-terminal domain is found at 839–882 (SDVDWENLQHQTMPFIPQPDDETDTSYFEARNNAQHLTISGFSL). Phosphoserine occurs at positions 878 and 881.

The protein belongs to the protein kinase superfamily. AGC Ser/Thr protein kinase family. Post-translationally, phosphorylation at Thr-744 by CDK1 during M phase activates its kinase activity. Maximum phosphorylation occurs in prometaphase.

The protein resides in the cytoplasm. The protein localises to the cytoskeleton. Its subcellular location is the microtubule organizing center. It localises to the centrosome. It is found in the nucleus. The enzyme catalyses L-seryl-[protein] + ATP = O-phospho-L-seryl-[protein] + ADP + H(+). It catalyses the reaction L-threonyl-[protein] + ATP = O-phospho-L-threonyl-[protein] + ADP + H(+). Functionally, serine/threonine kinase that plays a key role in M phase by acting as a regulator of mitosis entry and maintenance. Acts by promoting the inactivation of protein phosphatase 2A (PP2A) during M phase: does not directly inhibit PP2A but acts by mediating phosphorylation and subsequent activation of ARPP19 and ENSA at 'Ser-62' and 'Ser-67', respectively. ARPP19 and ENSA are phosphatase inhibitors that specifically inhibit the PPP2R2D (PR55-delta) subunit of PP2A. Inactivation of PP2A during M phase is essential to keep cyclin-B1-CDK1 activity high. Following DNA damage, it is also involved in checkpoint recovery by being inhibited. The protein is Serine/threonine-protein kinase greatwall (MASTL) of Ailuropoda melanoleuca (Giant panda).